The primary structure comprises 898 residues: Fasciclin-2 (898 aa).

Residues 1 to 22 (MRTVACAVLLACFMGCLAGAWA) form the signal peptide. Over 23 to 764 (QSAGLEILPN…EDGSEGQMSS (742 aa)) the chain is Extracellular. Ig-like C2-type domains are found at residues 31 to 124 (PNSE…KQLS), 134 to 219 (PITW…RPIR), 226 to 316 (PQMS…VEVT), 321 to 423 (PRIG…GHLM), and 428 to 525 (PSFA…IMLR). Residues Asn-35, Asn-51, Asn-149, Asn-192, Asn-297, and Asn-328 are each glycosylated (N-linked (GlcNAc...) asparagine). An intrachain disulfide couples Cys-48 to Cys-113. Disulfide bonds link Cys-156/Cys-203 and Cys-248/Cys-300. Cys-343 and Cys-407 are joined by a disulfide. 3 N-linked (GlcNAc...) asparagine glycosylation sites follow: Asn-447, Asn-457, and Asn-580. A disulfide bridge connects residues Cys-450 and Cys-509. Fibronectin type-III domains lie at 532–626 (AVLQ…TPRI) and 644–745 (GTEN…VKDP). A helical membrane pass occupies residues 765 to 782 (AAIVVLVVAALLLALLVV). Topologically, residues 783–898 (DLVCCLVWRG…TSFVGKDSAV (116 aa)) are cytoplasmic.

Its subcellular location is the membrane. In terms of biological role, neuronal recognition molecule. Involved in a pathway recognition for axons during the development of nerve fascicles. The sequence is that of Fasciclin-2 (FAS2) from Schistocerca americana (American grasshopper).